A 91-amino-acid polypeptide reads, in one-letter code: MARICLHAYVGGRVQGVGFRQATREEADRLELDGWVRNLDDGRVEVVWEGEEDRAKALERWLGRGPRHAEVSAVEVEQMPLQGIAGFVVRR.

An Acylphosphatase-like domain is found at 5–91 (CLHAYVGGRV…QGIAGFVVRR (87 aa)). Residues arginine 20 and asparagine 38 contribute to the active site.

This sequence belongs to the acylphosphatase family.

The enzyme catalyses an acyl phosphate + H2O = a carboxylate + phosphate + H(+). This Pseudomonas aeruginosa (strain ATCC 15692 / DSM 22644 / CIP 104116 / JCM 14847 / LMG 12228 / 1C / PRS 101 / PAO1) protein is Acylphosphatase (acyP).